A 174-amino-acid polypeptide reads, in one-letter code: NADH-ubiquinone oxidoreductase chain 6 (174 aa).

Transmembrane regions (helical) follow at residues 1-21 (MTYVLFTLSVMLVMGFVGFSS), 24-44 (SPIYGGLALVVSGVVGCMIIL), 47-67 (GGAYLGLVMFLIYLGGMMVVF), 86-106 (FEVLACFLVGLMMEVGLVLWV), and 151-171 (WLVVVAGWTLFVGVYVVIEIT).

This sequence belongs to the complex I subunit 6 family. Core subunit of respiratory chain NADH dehydrogenase (Complex I) which is composed of 45 different subunits.

Its subcellular location is the mitochondrion inner membrane. It catalyses the reaction a ubiquinone + NADH + 5 H(+)(in) = a ubiquinol + NAD(+) + 4 H(+)(out). In terms of biological role, core subunit of the mitochondrial membrane respiratory chain NADH dehydrogenase (Complex I) which catalyzes electron transfer from NADH through the respiratory chain, using ubiquinone as an electron acceptor. Essential for the catalytic activity and assembly of complex I. In Papio hamadryas (Hamadryas baboon), this protein is NADH-ubiquinone oxidoreductase chain 6 (MT-ND6).